Reading from the N-terminus, the 455-residue chain is Ribulose bisphosphate carboxylase large chain (455 aa).

The residue at position 5 (K5) is an N6,N6,N6-trimethyllysine. N114 and T164 together coordinate substrate. K166 serves as the catalytic Proton acceptor. Residue K168 coordinates substrate. Mg(2+) is bound by residues K192, D194, and E195. An N6-carboxylysine modification is found at K192. Catalysis depends on H285, which acts as the Proton acceptor. Substrate-binding residues include R286, H318, and S370.

It belongs to the RuBisCO large chain family. Type I subfamily. Heterohexadecamer of 8 large chains and 8 small chains; disulfide-linked. The disulfide link is formed within the large subunit homodimers. Mg(2+) is required as a cofactor. The disulfide bond which can form in the large chain dimeric partners within the hexadecamer appears to be associated with oxidative stress and protein turnover.

The protein resides in the plastid. Its subcellular location is the chloroplast. It catalyses the reaction 2 (2R)-3-phosphoglycerate + 2 H(+) = D-ribulose 1,5-bisphosphate + CO2 + H2O. The catalysed reaction is D-ribulose 1,5-bisphosphate + O2 = 2-phosphoglycolate + (2R)-3-phosphoglycerate + 2 H(+). Its function is as follows. RuBisCO catalyzes two reactions: the carboxylation of D-ribulose 1,5-bisphosphate, the primary event in carbon dioxide fixation, as well as the oxidative fragmentation of the pentose substrate in the photorespiration process. Both reactions occur simultaneously and in competition at the same active site. The polypeptide is Ribulose bisphosphate carboxylase large chain (Erythrina crista-galli (Cockspur coral tree)).